Consider the following 126-residue polypeptide: Protein translocase subunit SecE (126 aa).

Helical transmembrane passes span 18 to 38 (LKWV…YLYG), 40 to 60 (LSVV…LGVA), and 97 to 117 (IVLA…GIMV).

This sequence belongs to the SecE/SEC61-gamma family. Component of the Sec protein translocase complex. Heterotrimer consisting of SecY, SecE and SecG subunits. The heterotrimers can form oligomers, although 1 heterotrimer is thought to be able to translocate proteins. Interacts with the ribosome. Interacts with SecDF, and other proteins may be involved. Interacts with SecA.

Its subcellular location is the cell inner membrane. Essential subunit of the Sec protein translocation channel SecYEG. Clamps together the 2 halves of SecY. May contact the channel plug during translocation. The protein is Protein translocase subunit SecE of Vibrio cholerae serotype O1 (strain ATCC 39315 / El Tor Inaba N16961).